Reading from the N-terminus, the 541-residue chain is Calcium-dependent protein kinase 25 (541 aa).

Positions 1–11 are enriched in gly residues; it reads MGQCCTGGGKA. The disordered stretch occupies residues 1-74; it reads MGQCCTGGGK…AGPIGEVLER (74 aa). Gly2 carries N-myristoyl glycine lipidation. Low complexity predominate over residues 38–67; the sequence is AKQQPCSPAAKAAATEAAAAASSSKKPAGP. In terms of domain architecture, Protein kinase spans 83 to 341; that stretch reads YSIGKELGRG…AFQVLNHPWI (259 aa). ATP-binding positions include 89–97 and Lys112; that span reads LGRGQFGVT. The active-site Proton acceptor is Asp207. The segment at 347–377 is autoinhibitory domain; the sequence is APDVPLDNVVLNRLKQFRAMNQFKKAALRII. EF-hand domains are found at residues 384 to 419, 420 to 455, 456 to 491, and 493 to 526; these read EEIKGLKEMFKNIDKDNSGTITLEELKNGLAKQGTK, FSDNEIEQLMEAADADGNGIIDYEEFVTATVHMNKM, DREEHLYTAFQYFDKDNSGYITKEELEQALKEQGLY, and ANEIKDVITDADSNNDGRIDYSEFVAMMRKGSGC. Ca(2+) is bound by residues Asp397, Asp399, Ser401, Thr403, Glu408, Asp433, Asp435, Asn437, Glu444, Asp469, Asp471, Ser473, Tyr475, Glu480, Asp504, Asn506, Asp508, Arg510, and Glu515.

This sequence belongs to the protein kinase superfamily. Ser/Thr protein kinase family. CDPK subfamily. Specifically expressed in heading panicles, spikelets and mature pollen grains. Not expressed in vegetative tissues.

Its subcellular location is the membrane. The catalysed reaction is L-seryl-[protein] + ATP = O-phospho-L-seryl-[protein] + ADP + H(+). It catalyses the reaction L-threonyl-[protein] + ATP = O-phospho-L-threonyl-[protein] + ADP + H(+). With respect to regulation, activated by calcium. Autophosphorylation may play an important role in the regulation of the kinase activity. May play a role in signal transduction pathways that involve calcium as a second messenger. In Oryza sativa subsp. japonica (Rice), this protein is Calcium-dependent protein kinase 25.